A 341-amino-acid polypeptide reads, in one-letter code: Serine/threonine-protein kinase PDIK1L (341 aa).

Residues 8 to 334 (YDLIREVGRG…LELRLVQIAF (327 aa)) form the Protein kinase domain. Residues 14–22 (VGRGSYGVV) and lysine 37 each bind ATP. The Proton acceptor role is filled by aspartate 164.

Belongs to the protein kinase superfamily. Ser/Thr protein kinase family. As to expression, expressed in liver, kidney, pancreas, spleen, thymus and prostate.

Its subcellular location is the nucleus. It carries out the reaction L-seryl-[protein] + ATP = O-phospho-L-seryl-[protein] + ADP + H(+). The enzyme catalyses L-threonyl-[protein] + ATP = O-phospho-L-threonyl-[protein] + ADP + H(+). The chain is Serine/threonine-protein kinase PDIK1L (PDIK1L) from Homo sapiens (Human).